The sequence spans 325 residues: Secreted RxLR effector protein RXLR-C07 (325 aa).

An N-terminal signal peptide occupies residues 1 to 19 (MQGVRITILWCIVLATIYA). TPR repeat units lie at residues 37–75 (RGLR…GEER), 92–125 (AQIL…IEKI), 134–167 (GLSL…VKKG), 218–251 (AELY…FLQR), and 260–293 (AFSL…AVSI). The RxLR-dEER motif lies at 37–75 (RGLRNAGMKANDERMFKDAIEKLRHAISLLHNRVFGEER).

The protein belongs to the RxLR effector family.

It localises to the secreted. The protein localises to the host cytoplasm. It is found in the host nucleus. The protein resides in the host nucleolus. Functionally, secreted effector that suppresses pattern-triggered immunity (PTI) in plant host. The polypeptide is Secreted RxLR effector protein RXLR-C07 (Plasmopara halstedii (Downy mildew of sunflower)).